Consider the following 418-residue polypeptide: Probable basic-leucine zipper transcription factor E (418 aa).

Positions 8 to 47 (IQQIQQLHMLLQQQQQQQQQQQQQQQQQQQQLQQQNFQLT) form a coiled coil. Composition is skewed to low complexity over residues 51-71 (FQIP…NNNN) and 95-134 (INTT…NNNT). Disordered regions lie at residues 51–75 (FQIP…ETAF), 95–149 (INTT…KKQK), 165–196 (PTAA…TTNT), and 211–252 (KNQE…KNRR). Over residues 169–179 (VKKKPPAKKSA) the composition is skewed to basic residues. The segment covering 180-196 (KNAASQPTSPTLSTTNT) has biased composition (low complexity). Residues 220-239 (DNSEESDSDEEDFENGDNEN) show a composition bias toward acidic residues. A bZIP domain is found at 246-309 (GDRKNRRLLK…QLMKDKVRYL (64 aa)). The segment at 248–268 (RKNRRLLKNREAAQLFRQRQK) is basic motif. Residues 274–281 (LESKASSL) form a leucine-zipper region. Residues 324–362 (SVVNQDNINNLNNNLNGLQNQQNNNNNNNNNNNNNNNNN) adopt a coiled-coil conformation. Residues 336–418 (NNLNGLQNQQ…DSLLFNLPPD (83 aa)) are disordered.

The protein belongs to the bZIP family.

Its subcellular location is the nucleus. Probable transcriptional regulator. The polypeptide is Probable basic-leucine zipper transcription factor E (bzpE) (Dictyostelium discoideum (Social amoeba)).